The primary structure comprises 309 residues: Protein FdhE (309 aa).

It belongs to the FdhE family.

Its subcellular location is the cytoplasm. Necessary for formate dehydrogenase activity. This chain is Protein FdhE, found in Salmonella typhimurium (strain LT2 / SGSC1412 / ATCC 700720).